The sequence spans 609 residues: Proline--tRNA ligase (609 aa).

Belongs to the class-II aminoacyl-tRNA synthetase family. ProS type 1 subfamily. In terms of assembly, homodimer.

The protein resides in the cytoplasm. It carries out the reaction tRNA(Pro) + L-proline + ATP = L-prolyl-tRNA(Pro) + AMP + diphosphate. In terms of biological role, catalyzes the attachment of proline to tRNA(Pro) in a two-step reaction: proline is first activated by ATP to form Pro-AMP and then transferred to the acceptor end of tRNA(Pro). As ProRS can inadvertently accommodate and process non-cognate amino acids such as alanine and cysteine, to avoid such errors it has two additional distinct editing activities against alanine. One activity is designated as 'pretransfer' editing and involves the tRNA(Pro)-independent hydrolysis of activated Ala-AMP. The other activity is designated 'posttransfer' editing and involves deacylation of mischarged Ala-tRNA(Pro). The misacylated Cys-tRNA(Pro) is not edited by ProRS. The protein is Proline--tRNA ligase of Synechococcus sp. (strain JA-2-3B'a(2-13)) (Cyanobacteria bacterium Yellowstone B-Prime).